The sequence spans 274 residues: DNA-directed RNA polymerase subunit Rpo3 (274 aa).

Cys202, Cys205, and Cys208 together coordinate [3Fe-4S] cluster.

This sequence belongs to the archaeal Rpo3/eukaryotic RPB3 RNA polymerase subunit family. In terms of assembly, part of the RNA polymerase complex. [3Fe-4S] cluster is required as a cofactor.

It localises to the cytoplasm. It catalyses the reaction RNA(n) + a ribonucleoside 5'-triphosphate = RNA(n+1) + diphosphate. DNA-dependent RNA polymerase (RNAP) catalyzes the transcription of DNA into RNA using the four ribonucleoside triphosphates as substrates. This Methanobrevibacter smithii (strain ATCC 35061 / DSM 861 / OCM 144 / PS) protein is DNA-directed RNA polymerase subunit Rpo3.